We begin with the raw amino-acid sequence, 261 residues long: MSDILDRIIDVKRQEVRAAQQSAPLEELRLQASTRDLRDFVGAIRAKHEAGLAAVIAEVKKASPSKGVLREHFVPADIARSYANHGAACLSVLTDVQFFKGSAQYLEEARAACQLPVLRKDFIVDPYQILEARAMGADAILLIVAALETSQMQDLEAYAHSLGLAVLVEVHDKDELVEALTLKTPLIGVNNRNLRTFETSIDTTLGLLDMMPDDRIVVTESGILSRTDVERMRAMDVNTFLVGEAFMRADEPGVELARMFF.

This sequence belongs to the TrpC family.

It catalyses the reaction 1-(2-carboxyphenylamino)-1-deoxy-D-ribulose 5-phosphate + H(+) = (1S,2R)-1-C-(indol-3-yl)glycerol 3-phosphate + CO2 + H2O. Its pathway is amino-acid biosynthesis; L-tryptophan biosynthesis; L-tryptophan from chorismate: step 4/5. This Paraburkholderia phymatum (strain DSM 17167 / CIP 108236 / LMG 21445 / STM815) (Burkholderia phymatum) protein is Indole-3-glycerol phosphate synthase.